We begin with the raw amino-acid sequence, 174 residues long: Alpha-crystallin B chain (174 aa).

M1 carries the N-acetylmethionine modification. The region spanning 55–163 (RMPSWLETGL…PERSIPITRE (109 aa)) is the sHSP domain. Zn(2+) is bound by residues H82, H103, E105, and H110. The tract at residues 148–174 (RKQSDVPERSIPITREEKPAIAGAQRK) is disordered. Residues 149 to 166 (KQSDVPERSIPITREEKP) show a composition bias toward basic and acidic residues.

Belongs to the small heat shock protein (HSP20) family. Heteromer composed of three CRYAA and one CRYAB subunits. Aggregates with homologous proteins, including the small heat shock protein HSPB1, to form large heteromeric complexes. Inter-subunit bridging via zinc ions enhances stability, which is crucial as there is no protein turn over in the lens. In terms of tissue distribution, lens as well as other tissues.

In terms of biological role, may contribute to the transparency and refractive index of the lens. This chain is Alpha-crystallin B chain (CRYAB), found in Anas platyrhynchos (Mallard).